The sequence spans 126 residues: uncharacterized protein (126 aa).

The interval 1–27 (MSKSKTPNFDDMEVLDDTNDEYDDSES) is disordered. Over residues 10-27 (DDMEVLDDTNDEYDDSES) the composition is skewed to acidic residues.

This is an uncharacterized protein from Halorubrum sp. PV6 (HRPV-1).